We begin with the raw amino-acid sequence, 561 residues long: Melanopsin-A (561 aa).

Residues 1–34 are Extracellular-facing; the sequence is MRPSTDTMEADTAATHRNFITKVDVPDHAHYTVA. The chain crosses the membrane as a helical span at residues 35–55; the sequence is FFVSVIGTLGVTGNALVQFAF. The Cytoplasmic segment spans residues 56 to 68; that stretch reads YSNKKLRNLPNYF. Residues 69 to 89 form a helical membrane-spanning segment; the sequence is IMNQAASDFLMAFTQSPFFFI. Over 90 to 104 the chain is Extracellular; the sequence is NCLNREWIFGELGCK. Cys-103 and Cys-181 are joined by a disulfide. Residues 105–125 form a helical membrane-spanning segment; it reads LYAFLGALFGITSMINLLAIS. Residues 126–148 lie on the Cytoplasmic side of the membrane; it reads LDRYMVITRPLEAMKWNSKRRTT. The chain crosses the membrane as a helical span at residues 149-169; that stretch reads IAILLVWLYSLAWSLAPLVGW. Topologically, residues 170–201 are extracellular; the sequence is SSYIPEGLRTSCTWDYVTYTASNRSYTMMLCC. Asn-192 carries N-linked (GlcNAc...) asparagine glycosylation. Residues 202-222 traverse the membrane as a helical segment; it reads FVFFIPLAIISYCYLFMFLAI. At 223–255 the chain is on the cytoplasmic side; the sequence is RKTSRDVERLGIQVRKSTIIRQKSIRTEWKLAK. Residues 256–276 form a helical membrane-spanning segment; that stretch reads IAFVVIVVYVLSWSPYACVTM. The Extracellular portion of the chain corresponds to 277 to 291; it reads ISWSGHANILSPYSK. A helical membrane pass occupies residues 292–312; that stretch reads TVPAVIAKASTIYNPFIYAII. Lys-299 is modified (N6-(retinylidene)lysine). Topologically, residues 313–561 are cytoplasmic; that stretch reads HQKYRKTLAD…EDSLEDNDVV (249 aa). Disordered regions lie at residues 359–385, 404–448, 479–503, and 539–561; these read AIRR…SYSS, ASFR…SATH, NGLS…SKSA, and SFTD…NDVV. Residues 371–385 are compositionally biased toward low complexity; that stretch reads ASASKTAAGASSYSS. Residues 550 to 561 show a composition bias toward acidic residues; sequence VDEDSLEDNDVV.

The protein belongs to the G-protein coupled receptor 1 family. Opsin subfamily. Expressed in retina and brain. Expressed in a subset of retinal horizontal cells as well as a small number of amacrine and retinal ganglion cells. Also expressed in a small population of neurons in the suprachiasmatic nucleus (SNC).

The protein localises to the cell membrane. In terms of biological role, photoreceptor implicated in non-image-forming responses to light. This chain is Melanopsin-A (opn4a), found in Gadus morhua (Atlantic cod).